The chain runs to 442 residues: NAD(P)H sulfur oxidoreductase (CoA-dependent) (442 aa).

Alanine 13 to alanine 14 contributes to the FAD binding site. Arginine 24 contacts CoA. FAD is bound by residues glutamate 35–alanine 36 and histidine 42–proline 44. CoA is bound by residues serine 41–cysteine 45, histidine 62–tyrosine 63, and arginine 72. The Redox-active role is filled by cysteine 45. FAD is bound by residues valine 82, aspartate 280, and alanine 298. Positions 302 and 358 each coordinate CoA. An FAD-binding site is contributed by tyrosine 422. Positions 430 and 438 each coordinate CoA.

It belongs to the class-III pyridine nucleotide-disulfide oxidoreductase family. As to quaternary structure, homodimer. The cofactor is FAD.

The protein resides in the cytoplasm. The catalysed reaction is hydrogen sulfide + NADP(+) = sulfur + NADPH. It carries out the reaction hydrogen sulfide + NAD(+) = sulfur + NADH. It catalyses the reaction NADP(+) + 2 CoA = CoA-disulfide + NADPH + H(+). The enzyme catalyses NAD(+) + 2 CoA = CoA-disulfide + NADH + H(+). Functionally, catalyzes the CoA-dependent reduction of elemental sulfur (S(0)) to produce hydrogen sulfide. Can use both NADPH and NADH, but shows a preference for NADPH. May enable S(0) to be used, via sulfide, for iron-sulfur cluster synthesis by SipA. Also shows coenzyme A disulfide reductase (CoADR) activity with both NADH and NADPH. However, CoADR specific activity is about 20-fold lower than the sulfur reduction assay and CoADR activity appears to be an artifactual side reaction and is not thought to have any physiological relevance. Also shows NAD(P)H oxidase activity with both NADH and NADPH. The sequence is that of NAD(P)H sulfur oxidoreductase (CoA-dependent) from Pyrococcus furiosus (strain ATCC 43587 / DSM 3638 / JCM 8422 / Vc1).